Reading from the N-terminus, the 227-residue chain is Killer cell lectin-like receptor subfamily B member 1A (227 aa).

The Cytoplasmic portion of the chain corresponds to 1 to 45; sequence MDTARVYFGLKPPRTPGAWHESPPSLPPDACRCPRSHRLALKLSC. The LCK-binding motif signature appears at 31-34; that stretch reads CRCP. Residues 46-66 form a helical; Signal-anchor for type II membrane protein membrane-spanning segment; the sequence is AGLILLVVTLIGMSVLVRVLI. The Extracellular segment spans residues 67 to 227; the sequence is QKPSIEKCYV…TLSNYVGYGH (161 aa). The region spanning 93-212 is the C-type lectin domain; sequence ECPQDWLSHR…NSDNRWICQK (120 aa). Intrachain disulfides connect Cys-94–Cys-105, Cys-122–Cys-210, and Cys-189–Cys-202.

In terms of assembly, homodimer; disulfide-linked. Interacts with tyrosine kinase LCK. In terms of tissue distribution, expressed in natural killer cells.

It localises to the membrane. Plays a stimulatory role on natural killer (NK) cell cytotoxicity. The chain is Killer cell lectin-like receptor subfamily B member 1A (Klrb1a) from Mus musculus (Mouse).